Here is a 315-residue protein sequence, read N- to C-terminus: PDZ domain-containing protein GIPC2 (315 aa).

A compositionally biased stretch (basic residues) spans 1 to 12; the sequence is MPLKLRGKKKAK. Positions 1-34 are disordered; that stretch reads MPLKLRGKKKAKSKETAGLVEGEPTGAGGGSLSA. Residues 117-197 enclose the PDZ domain; that stretch reads EVNVYKSEDS…EELFTMKLIE (81 aa).

The protein belongs to the GIPC family. Probably interacts with SEMA5A. As to expression, expressed at highest levels in ascending colon and at moderate levels in adult kidney. Expressed at low levels in adult pancreas and at very low levels in adult liver. Expression is down-regulated in several primary tumors, such as kidney, colon and rectal tumors.

It is found in the cytoplasm. The polypeptide is PDZ domain-containing protein GIPC2 (GIPC2) (Homo sapiens (Human)).